The following is a 199-amino-acid chain: FMN-dependent NADH:quinone oxidoreductase (199 aa).

FMN contacts are provided by residues S9, 15–17 (SNS), and 95–98 (MYNF).

Belongs to the azoreductase type 1 family. Homodimer. The cofactor is FMN.

The catalysed reaction is 2 a quinone + NADH + H(+) = 2 a 1,4-benzosemiquinone + NAD(+). It carries out the reaction N,N-dimethyl-1,4-phenylenediamine + anthranilate + 2 NAD(+) = 2-(4-dimethylaminophenyl)diazenylbenzoate + 2 NADH + 2 H(+). In terms of biological role, quinone reductase that provides resistance to thiol-specific stress caused by electrophilic quinones. Also exhibits azoreductase activity. Catalyzes the reductive cleavage of the azo bond in aromatic azo compounds to the corresponding amines. This Aromatoleum aromaticum (strain DSM 19018 / LMG 30748 / EbN1) (Azoarcus sp. (strain EbN1)) protein is FMN-dependent NADH:quinone oxidoreductase.